A 131-amino-acid polypeptide reads, in one-letter code: Profilin-1 (131 aa).

Belongs to the profilin family. In terms of assembly, occurs in many kinds of cells as a complex with monomeric actin in a 1:1 ratio.

It is found in the cytoplasm. The protein localises to the cytoskeleton. Binds to actin and affects the structure of the cytoskeleton. At high concentrations, profilin prevents the polymerization of actin, whereas it enhances it at low concentrations. By binding to PIP2, it inhibits the formation of IP3 and DG. The chain is Profilin-1 (PRO1) from Hordeum vulgare (Barley).